Reading from the N-terminus, the 411-residue chain is Arginine deiminase (411 aa).

Cys-399 serves as the catalytic Amidino-cysteine intermediate.

It belongs to the arginine deiminase family.

Its subcellular location is the cytoplasm. The catalysed reaction is L-arginine + H2O = L-citrulline + NH4(+). It functions in the pathway amino-acid degradation; L-arginine degradation via ADI pathway; carbamoyl phosphate from L-arginine: step 1/2. This chain is Arginine deiminase, found in Latilactobacillus sakei subsp. sakei (strain 23K) (Lactobacillus sakei subsp. sakei).